Here is a 787-residue protein sequence, read N- to C-terminus: Disintegrin and metalloproteinase domain-containing protein 32 (787 aa).

An N-terminal signal peptide occupies residues 1–16 (MFRLWLLLAGLCGLLA). S17 is subject to Phosphoserine. Positions 17-174 (SRPGFQNSLL…PMDDNIFISE (158 aa)) are excised as a propeptide. N-linked (GlcNAc...) asparagine glycosylation is found at N39 and N125. The Extracellular portion of the chain corresponds to 175-682 (KSEPAVPDLF…ERASGKTENT (508 aa)). In terms of domain architecture, Peptidase M12B spans 186–383 (LYLEMHIVVD…VGVKCLQNKP (198 aa)). 4 disulfides stabilise this stretch: C295-C378, C337-C362, C339-C344, and C450-C471. The Disintegrin domain maps to 391 to 479 (KPVCGNGRLE…ECGPDITLIN (89 aa)). N465 and N598 each carry an N-linked (GlcNAc...) asparagine glycan. An EGF-like domain is found at 622-654 (SAHVCSQQCSGHGVCDSRNKCHCSPGYKPPNCQ). Cystine bridges form between C626-C636, C630-C642, and C644-C653. A helical transmembrane segment spans residues 683 to 703 (WLLGFLIALPILIVTTAIVLA). At 704-787 (RKQLKKWFAK…DSTQTQSSSN (84 aa)) the chain is on the cytoplasmic side. The disordered stretch occupies residues 715 to 787 (EEFPSSESKS…DSTQTQSSSN (73 aa)). The segment covering 728–749 (TQTYASQSSSEGSTQTYASQTR) has biased composition (polar residues). Over residues 771–787 (TSRSKSQDSTQTQSSSN) the composition is skewed to low complexity.

In terms of tissue distribution, testis specific.

It is found in the membrane. Functionally, may play a role in sperm development and fertilization This is a non-catalytic metalloprotease-like protein. The chain is Disintegrin and metalloproteinase domain-containing protein 32 (ADAM32) from Homo sapiens (Human).